Here is a 213-residue protein sequence, read N- to C-terminus: Holliday junction branch migration complex subunit RuvA (213 aa).

The segment at Met1–Ala64 is domain I. A domain II region spans residues Gln65–Asn143. Positions Gln144–Asp152 are flexible linker. The segment at Asp152–Arg213 is domain III.

The protein belongs to the RuvA family. Homotetramer. Forms an RuvA(8)-RuvB(12)-Holliday junction (HJ) complex. HJ DNA is sandwiched between 2 RuvA tetramers; dsDNA enters through RuvA and exits via RuvB. An RuvB hexamer assembles on each DNA strand where it exits the tetramer. Each RuvB hexamer is contacted by two RuvA subunits (via domain III) on 2 adjacent RuvB subunits; this complex drives branch migration. In the full resolvosome a probable DNA-RuvA(4)-RuvB(12)-RuvC(2) complex forms which resolves the HJ.

The protein resides in the cytoplasm. Its function is as follows. The RuvA-RuvB-RuvC complex processes Holliday junction (HJ) DNA during genetic recombination and DNA repair, while the RuvA-RuvB complex plays an important role in the rescue of blocked DNA replication forks via replication fork reversal (RFR). RuvA specifically binds to HJ cruciform DNA, conferring on it an open structure. The RuvB hexamer acts as an ATP-dependent pump, pulling dsDNA into and through the RuvAB complex. HJ branch migration allows RuvC to scan DNA until it finds its consensus sequence, where it cleaves and resolves the cruciform DNA. The chain is Holliday junction branch migration complex subunit RuvA from Kocuria rhizophila (strain ATCC 9341 / DSM 348 / NBRC 103217 / DC2201).